Here is a 178-residue protein sequence, read N- to C-terminus: Outer envelope pore protein 16-2, chloroplastic (178 aa).

A contains beta strands region spans residues 1–102 (MEKSGGRIVM…DALVKNTGKE (102 aa)). A helical membrane pass occupies residues 103–119 (SLQWGLAAGLYSGITYG).

The protein belongs to the Tim17/Tim22/Tim23 family. Plastid outer envelope porin OEP16 (TC 1.B.30) subfamily. As to quaternary structure, homodimer and oligomers in membrane. Detected in pollen and seeds. Present in leaves and cotyledons.

The protein localises to the plastid. It is found in the chloroplast outer membrane. Voltage-dependent high-conductance channel with a slight cation-selectivity; selective for amino acids but excludes triosephosphates or uncharged sugars. Non-essential amino acid-selective channel protein and translocation pore for NADPH:protochlorophyllide oxidoreductase A (PORA) and possibly PORB. The sequence is that of Outer envelope pore protein 16-2, chloroplastic (OEP162) from Arabidopsis thaliana (Mouse-ear cress).